Reading from the N-terminus, the 1200-residue chain is PAN2-PAN3 deadenylation complex catalytic subunit Pan2 (1200 aa).

WD repeat units follow at residues 153-193 (DENE…QKYA), 195-231 (ETPG…VEHE), 244-280 (VHGN…AITP), and 328-367 (PVGP…SFNP). Residues 368-484 (YSRETEFALP…PTGREEEPLH (117 aa)) form a linker region. Residues 485 to 923 (TVSKKYRKVT…VPAILYYVKR (439 aa)) enclose the USP domain. S784 is modified (phosphoserine). The 173-residue stretch at 974 to 1146 (VGLDAEFVTL…EDARTALQLY (173 aa)) folds into the Exonuclease domain. A divalent metal cation contacts are provided by D977, E979, D1086, and D1138. S1188 carries the phosphoserine modification.

This sequence belongs to the peptidase C19 family. PAN2 subfamily. In terms of assembly, forms a heterotrimer with an asymmetric homodimer of the regulatory subunit PAN3 to form the poly(A)-nuclease (PAN) deadenylation complex. Interacts with PAN3 isoform 1/Pan3L and isoform 3/Pan3S. Interacts with ZFP36. A divalent metal cation serves as cofactor.

Its subcellular location is the cytoplasm. It is found in the P-body. The protein resides in the nucleus. It carries out the reaction Exonucleolytic cleavage of poly(A) to 5'-AMP.. With respect to regulation, positively regulated by the regulatory subunit PAN3. Functionally, catalytic subunit of the poly(A)-nuclease (PAN) deadenylation complex, one of two cytoplasmic mRNA deadenylases involved in general and miRNA-mediated mRNA turnover. PAN specifically shortens poly(A) tails of RNA and the activity is stimulated by poly(A)-binding protein (PABP). PAN deadenylation is followed by rapid degradation of the shortened mRNA tails by the CCR4-NOT complex. Deadenylated mRNAs are then degraded by two alternative mechanisms, namely exosome-mediated 3'-5' exonucleolytic degradation, or deadenylation-dependent mRNA decaping and subsequent 5'-3' exonucleolytic degradation by XRN1. Also acts as an important regulator of the HIF1A-mediated hypoxic response. Required for HIF1A mRNA stability independent of poly(A) tail length regulation. The polypeptide is PAN2-PAN3 deadenylation complex catalytic subunit Pan2 (Mus musculus (Mouse)).